The chain runs to 308 residues: Olfactory receptor OR9H1 (308 aa).

Residues 1–26 are Extracellular-facing; the sequence is MVNFTHVSEFVLLGFQGGPGMQAMLF. The chain crosses the membrane as a helical span at residues 27–47; sequence LIFLILYGIAVVGNLGMIVII. The Cytoplasmic segment spans residues 48–58; sequence WVDAHLHTPMY. Residues 59-81 traverse the membrane as a helical segment; it reads AFLQSLSLLDICYSSTIAPRALA. Residues 82–95 are Extracellular-facing; sequence NSMQEDHTISFGGC. A disulfide bridge links cysteine 95 with cysteine 177. Residues 96–116 traverse the membrane as a helical segment; that stretch reads AAQFFFLSLFGITEAFLLAAM. Over 117-137 the chain is Cytoplasmic; sequence AYDRFIAICNPLLYSVSMSHQ. The chain crosses the membrane as a helical span at residues 138–158; that stretch reads VCVLLISGSYLWGVVNAIAQT. The Extracellular portion of the chain corresponds to 159 to 203; it reads TMTFRLPFCGSNEINDFFCDVPPLLSLSCSDTFINQLVLLGLCGS. The helical transmembrane segment at 204-224 threads the bilayer; that stretch reads IIVSTFLIVLVSYIYIISTIL. Over 225 to 245 the chain is Cytoplasmic; that stretch reads RIPTMQGCQKAFSTCASHLTG. The chain crosses the membrane as a helical span at residues 246–266; the sequence is VCLFFGTVFFMYAQPSAIFFM. Over 267-269 the chain is Extracellular; the sequence is EQS. Residues 270-290 traverse the membrane as a helical segment; the sequence is KIVSIFYTMVIPMLNPLIYSL. At 291–308 the chain is on the cytoplasmic side; sequence RNKEVKQALRRSMQKLSL.

This sequence belongs to the G-protein coupled receptor 1 family.

The protein resides in the cell membrane. Functionally, odorant receptor. The protein is Olfactory receptor OR9H1 of Homo sapiens (Human).